Reading from the N-terminus, the 149-residue chain is Ribonuclease-like 3 (149 aa).

The first 22 residues, 1 to 22 (MGIHQCTAVVLLLLCASLSTYG), serve as a signal peptide directing secretion. Gln23 is subject to Pyrrolidone carboxylic acid. The Proton acceptor role is filled by His38. Intrachain disulfides connect Cys48-Cys109, Cys66-Cys120, and Cys84-Cys135. Residue 67–71 (KEVNT) coordinates substrate. The active-site Proton donor is the His142.

Belongs to the pancreatic ribonuclease family. Post-translationally, cleavage between Arg-55 and Arg-56 is catalyzed by a membrane-localized Gram-negative bacterium protease (OmpT in E.coli). The excised fragment is then transported to the bacterium cytosol for cleavage of the disulfide bridge linking Cys-48 and Cys-109, thus separating the N-terminal and LF-ZF3. LF-ZF3 but not the N-terminal peptide possesses bactericidal activity. As to expression, strongly expressed in the adult liver and gut, and weakly in the heart and testis.

The protein resides in the secreted. Ribonuclease. Angiogenic. Plays a role in host defense. Exhibits strong antibacterial activity against Gram-negative bacteria but mild antibacterial activity against Gram-positive bacteria. The RNase activity is not required for the bactericidal activity. In Danio rerio (Zebrafish), this protein is Ribonuclease-like 3.